Consider the following 439-residue polypeptide: Ribosomal protein uS12 methylthiotransferase RimO (439 aa).

The 111-residue stretch at 6-116 folds into the MTTase N-terminal domain; the sequence is GKVGFVSLGC…VMNQVHQVAP (111 aa). 6 residues coordinate [4Fe-4S] cluster: Cys-15, Cys-51, Cys-80, Cys-148, Cys-152, and Cys-155. The Radical SAM core domain occupies 134-371; sequence LTPKHYAYLK…MEVQQRISAS (238 aa). The region spanning 374–439 is the TRAM domain; it reads QAKIGKRMDV…DEYDLWGRPV (66 aa).

The protein belongs to the methylthiotransferase family. RimO subfamily. The cofactor is [4Fe-4S] cluster.

The protein resides in the cytoplasm. It catalyses the reaction L-aspartate(89)-[ribosomal protein uS12]-hydrogen + (sulfur carrier)-SH + AH2 + 2 S-adenosyl-L-methionine = 3-methylsulfanyl-L-aspartate(89)-[ribosomal protein uS12]-hydrogen + (sulfur carrier)-H + 5'-deoxyadenosine + L-methionine + A + S-adenosyl-L-homocysteine + 2 H(+). Its function is as follows. Catalyzes the methylthiolation of an aspartic acid residue of ribosomal protein uS12. The protein is Ribosomal protein uS12 methylthiotransferase RimO of Hahella chejuensis (strain KCTC 2396).